Reading from the N-terminus, the 365-residue chain is Protein Tob1 (365 aa).

The short motif at 22 to 39 (RRRVNIFGEELERLLKQK) is the Bipartite nuclear localization signal element. The important for nuclear localization stretch occupies residues 82–92 (VRGNLPQDLSV). The span at 144–160 (DPASSVSSSPSPPFGHS) shows a compositional bias: low complexity. A disordered region spans residues 144 to 171 (DPASSVSSSPSPPFGHSAAVSPTFMPRS). The required for interaction with CPEB3 stretch occupies residues 161–220 (AAVSPTFMPRSTQPLTFTTATFAATKFGSTKMKNSGRSSKVARTSPISLGLNVNVNDLLK). T204 carries the phosphothreonine modification. The short motif at 228–236 (MHSLYGLGL) is the Nuclear export signal element. Residues 233-287 (GLGLGSQQQPQPQPQQPPSQPPPPPPPPQQQQQHQQQQQQQQQQQQQPQQQTSAL) form a disordered region. The segment covering 243–261 (QPQPQQPPSQPPPPPPPPQ) has biased composition (pro residues). A compositionally biased stretch (low complexity) spans 262–283 (QQQQHQQQQQQQQQQQQQPQQQ).

The protein belongs to the BTG family. In terms of assembly, interacts with ERBB2. Interacts with CNOT7. Interacts with CPEB3 (via C-terminal RNA-binding region); recruits CNOT7 to CPEB3 to form a ternary complex required for mRNA deadenylation and decay. Interacts with CNOT8. Interacts with CPEB4. Post-translationally, phosphorylated on Ser and Thr residues.

The protein resides in the cytoplasm. Its subcellular location is the nucleus. Its function is as follows. Anti-proliferative protein; the function is mediated by association with deadenylase subunits of the CCR4-NOT complex. Mediates CPEB3-accelerated mRNA deadenylation by binding to CPEB3 and recruiting CNOT7 which leads to target mRNA deadenylation and decay. The protein is Protein Tob1 (Tob1) of Rattus norvegicus (Rat).